Consider the following 168-residue polypeptide: PTS system glucose-specific EIIA component (168 aa).

One can recognise a PTS EIIA type-1 domain in the interval 38–142 (DEVFSNKIVG…STLTPVIISN (105 aa)). The Zn(2+) site is built by His75 and His90. His90 acts as the Tele-phosphohistidine intermediate; for EIIA activity in catalysis. His90 carries the phosphohistidine; by HPr modification.

Zn(2+) serves as cofactor.

The protein resides in the cytoplasm. Functionally, the phosphoenolpyruvate-dependent sugar phosphotransferase system (sugar PTS), a major carbohydrate active transport system, catalyzes the phosphorylation of incoming sugar substrates concomitantly with their translocation across the cell membrane. The enzyme II complex composed of PtsG and Crr is involved in glucose transport. The sequence is that of PTS system glucose-specific EIIA component (crr) from Buchnera aphidicola subsp. Baizongia pistaciae (strain Bp).